The following is a 262-amino-acid chain: Spindlin-Z (262 aa).

The segment at 1-50 (MKTPFGKSPGQRSRADAGHAGVSASMMKKRTSHKKHRNNVGPSKPISQPR) is disordered. Positions 27–38 (MKKRTSHKKHRN) are enriched in basic residues.

It belongs to the SPIN/STSY family. As to expression, expressed in several tissues including testis.

It localises to the nucleus. Functionally, may play a role in mitosis. In Gallus gallus (Chicken), this protein is Spindlin-Z (SPINZ).